Here is a 973-residue protein sequence, read N- to C-terminus: Vacuolar membrane protease (973 aa).

Residues 1-15 lie on the Cytoplasmic side of the membrane; that stretch reads MARQYSRTNPLGFTP. The helical transmembrane segment at 16–36 threads the bilayer; the sequence is WPVTIITALVYLALVIPLLVV. The Vacuolar portion of the chain corresponds to 37-383; that stretch reads QHVVPSAPGS…STLAVFELHT (347 aa). 2 N-linked (GlcNAc...) asparagine glycosylation sites follow: Asn-52 and Asn-115. The Zn(2+) site is built by His-167 and Asp-179. Glu-213 serves as the catalytic Proton acceptor. Zn(2+)-binding residues include Glu-214, Glu-239, and His-312. A helical membrane pass occupies residues 384 to 404; it reads LFALSVTLLIVAPLVLLATSI. Over 405–438 the chain is Cytoplasmic; sequence ALVRADRMYLFRSTARVPGSDDFDEGVSLQGVRG. A helical transmembrane segment spans residues 439–459; it reads FFRFPFLLVIPTGVAVGLAYL. Residues 460 to 469 lie on the Vacuolar side of the membrane; sequence VTKINPYIIH. A helical membrane pass occupies residues 470–490; it reads SSEYAVWSMMISAWVFLAWFV. Over 491–504 the chain is Cytoplasmic; it reads SRVADFARPSAFHR. The chain crosses the membrane as a helical span at residues 505 to 525; the sequence is VYVLTWMFVAEWVLLVIATVY. The Vacuolar portion of the chain corresponds to 526 to 529; sequence ENRY. The helical transmembrane segment at 530-550 threads the bilayer; it reads GLAGGYFVFFALSGTFLATWI. The Cytoplasmic portion of the chain corresponds to 551–674; sequence SYLELFALPR…GLPKWTWVLQ (124 aa). Positions 572–623 are disordered; that stretch reads SRYASNHGSRLGTSSGEHGMDDAEDEEDDDGDDEDEARNVEEEPTESTSLLR. Residues 574-587 are compositionally biased toward polar residues; that stretch reads YASNHGSRLGTSSG. Residues 593–607 show a composition bias toward acidic residues; that stretch reads DAEDEEDDDGDDEDE. A helical transmembrane segment spans residues 675 to 695; that stretch reads FLLSAPIVLILVGPLALLLTA. Residues 696–708 are Vacuolar-facing; sequence ALRQTAQDGSSPL. A helical transmembrane segment spans residues 709-729; that stretch reads FVYIAIAVLTTLLVTPLLPFI. The Cytoplasmic segment spans residues 730–735; the sequence is HRYTHH. Residues 736–756 traverse the membrane as a helical segment; it reads IPLFLLLVFTGTLIYNLVAFP. The Vacuolar portion of the chain corresponds to 757-973; that stretch reads FSPSNRLKLF…LVEGSRRFEV (217 aa). N-linked (GlcNAc...) asparagine glycosylation is found at Asn-803 and Asn-839.

It belongs to the peptidase M28 family. Zn(2+) serves as cofactor.

The protein resides in the vacuole membrane. May be involved in vacuolar sorting and osmoregulation. The protein is Vacuolar membrane protease of Aspergillus clavatus (strain ATCC 1007 / CBS 513.65 / DSM 816 / NCTC 3887 / NRRL 1 / QM 1276 / 107).